The sequence spans 424 residues: 3-ketoacyl-CoA thiolase, peroxisomal (424 aa).

The transit peptide at 1 to 26 directs the protein to the peroxisome; sequence MQRLQVVLGHLRGPADSGWMPQAAPC. Positions 1-26 are PTS2-type peroxisomal targeting signal; the sequence is MQRLQVVLGHLRGPADSGWMPQAAPC. Thr59 and Thr60 each carry phosphothreonine. The active-site Acyl-thioester intermediate is Cys123. Residues His377 and Cys408 each act as proton acceptor in the active site.

Belongs to the thiolase-like superfamily. Thiolase family. Homodimer. Interacts (via PTS2-type peroxisomal targeting signal region) with PEX7; leading to its translocation into peroxisomes.

Its subcellular location is the peroxisome. It carries out the reaction an acyl-CoA + acetyl-CoA = a 3-oxoacyl-CoA + CoA. It catalyses the reaction 2 acetyl-CoA = acetoacetyl-CoA + CoA. The catalysed reaction is tetradecanoyl-CoA + acetyl-CoA = 3-oxohexadecanoyl-CoA + CoA. The enzyme catalyses hexanoyl-CoA + acetyl-CoA = 3-oxooctanoyl-CoA + CoA. It carries out the reaction 3-oxohexadecanedioyl-CoA + CoA = tetradecanedioyl-CoA + acetyl-CoA. It catalyses the reaction 3-oxo-(6Z,9Z,12Z,15Z,18Z,21Z)-tetracosahexaenoyl-CoA + CoA = (4Z,7Z,10Z,13Z,16Z,19Z)-docosahexaenoyl-CoA + acetyl-CoA. It participates in lipid metabolism; peroxisomal fatty acid beta-oxidation. Functionally, responsible for the thiolytic cleavage of straight chain 3-keto fatty acyl-CoAs (3-oxoacyl-CoAs). Plays an important role in fatty acid peroxisomal beta-oxidation. Catalyzes the cleavage of short, medium, long, and very long straight chain 3-oxoacyl-CoAs. The chain is 3-ketoacyl-CoA thiolase, peroxisomal from Homo sapiens (Human).